Consider the following 164-residue polypeptide: Phosphopantetheine adenylyltransferase (164 aa).

Position 10 (serine 10) interacts with substrate. ATP-binding positions include 10–11 and histidine 18; that span reads SF. Substrate is bound by residues lysine 42, leucine 74, and arginine 88. ATP-binding positions include 89–91, glutamate 99, and 124–130; these read GLR and YSFLSSS.

The protein belongs to the bacterial CoaD family. In terms of assembly, homohexamer. Mg(2+) is required as a cofactor.

It localises to the cytoplasm. It carries out the reaction (R)-4'-phosphopantetheine + ATP + H(+) = 3'-dephospho-CoA + diphosphate. Its pathway is cofactor biosynthesis; coenzyme A biosynthesis; CoA from (R)-pantothenate: step 4/5. Its function is as follows. Reversibly transfers an adenylyl group from ATP to 4'-phosphopantetheine, yielding dephospho-CoA (dPCoA) and pyrophosphate. The chain is Phosphopantetheine adenylyltransferase from Bacillus licheniformis (strain ATCC 14580 / DSM 13 / JCM 2505 / CCUG 7422 / NBRC 12200 / NCIMB 9375 / NCTC 10341 / NRRL NRS-1264 / Gibson 46).